Here is a 274-residue protein sequence, read N- to C-terminus: Tryptophan synthase alpha chain (274 aa).

Catalysis depends on proton acceptor residues Glu-49 and Asp-60.

This sequence belongs to the TrpA family. In terms of assembly, tetramer of two alpha and two beta chains.

It carries out the reaction (1S,2R)-1-C-(indol-3-yl)glycerol 3-phosphate + L-serine = D-glyceraldehyde 3-phosphate + L-tryptophan + H2O. Its pathway is amino-acid biosynthesis; L-tryptophan biosynthesis; L-tryptophan from chorismate: step 5/5. Its function is as follows. The alpha subunit is responsible for the aldol cleavage of indoleglycerol phosphate to indole and glyceraldehyde 3-phosphate. The sequence is that of Tryptophan synthase alpha chain from Zymomonas mobilis subsp. mobilis (strain ATCC 31821 / ZM4 / CP4).